The primary structure comprises 286 residues: Nucleotide-binding protein APL_0334 (286 aa).

8–15 (GRSGSGKS) serves as a coordination point for ATP. 56–59 (DIRN) contributes to the GTP binding site.

Belongs to the RapZ-like family.

Displays ATPase and GTPase activities. In Actinobacillus pleuropneumoniae serotype 5b (strain L20), this protein is Nucleotide-binding protein APL_0334.